A 179-amino-acid polypeptide reads, in one-letter code: Shikimate kinase (179 aa).

Position 14 to 19 (14 to 19 (GAGKTT)) interacts with ATP. Thr-18 contacts Mg(2+). Asp-36, Arg-60, and Gly-82 together coordinate substrate. Residue Arg-120 participates in ATP binding. Residue Arg-139 coordinates substrate.

This sequence belongs to the shikimate kinase family. In terms of assembly, monomer. It depends on Mg(2+) as a cofactor.

The protein resides in the cytoplasm. The enzyme catalyses shikimate + ATP = 3-phosphoshikimate + ADP + H(+). The protein operates within metabolic intermediate biosynthesis; chorismate biosynthesis; chorismate from D-erythrose 4-phosphate and phosphoenolpyruvate: step 5/7. Functionally, catalyzes the specific phosphorylation of the 3-hydroxyl group of shikimic acid using ATP as a cosubstrate. The protein is Shikimate kinase of Methylococcus capsulatus (strain ATCC 33009 / NCIMB 11132 / Bath).